Here is a 361-residue protein sequence, read N- to C-terminus: 3-dehydroquinate synthase (361 aa).

NAD(+) contacts are provided by residues 72–77 (SGEKEK), 130–131 (TT), lysine 142, and lysine 151. Zn(2+)-binding residues include glutamate 184, histidine 247, and histidine 264.

It belongs to the sugar phosphate cyclases superfamily. Dehydroquinate synthase family. Requires Co(2+) as cofactor. Zn(2+) serves as cofactor. The cofactor is NAD(+).

It is found in the cytoplasm. It carries out the reaction 7-phospho-2-dehydro-3-deoxy-D-arabino-heptonate = 3-dehydroquinate + phosphate. Its pathway is metabolic intermediate biosynthesis; chorismate biosynthesis; chorismate from D-erythrose 4-phosphate and phosphoenolpyruvate: step 2/7. In terms of biological role, catalyzes the conversion of 3-deoxy-D-arabino-heptulosonate 7-phosphate (DAHP) to dehydroquinate (DHQ). The polypeptide is 3-dehydroquinate synthase (Bacillus cereus (strain AH820)).